Consider the following 126-residue polypeptide: MRQKAGSYLAVFAGGAIGSVLRELLGFQLPGLSFLTATFGINIAACFLLGWLYAIRHRLHPHLLHLGAVGFCGGLSTFSSFVLELDQLTRMDGWSIGLTAMTLEIAAGLAAAILGEALGRGREARR.

4 consecutive transmembrane segments (helical) span residues 9-29 (LAVFAGGAIGSVLRELLGFQL), 35-55 (LTATFGINIAACFLLGWLYAI), 63-83 (LLHLGAVGFCGGLSTFSSFVL), and 94-114 (WSIGLTAMTLEIAAGLAAAIL). Residues Gly-73 and Ser-76 each coordinate Na(+).

It belongs to the fluoride channel Fluc/FEX (TC 1.A.43) family.

Its subcellular location is the cell inner membrane. The enzyme catalyses fluoride(in) = fluoride(out). With respect to regulation, na(+) is not transported, but it plays an essential structural role and its presence is essential for fluoride channel function. Its function is as follows. Fluoride-specific ion channel. Important for reducing fluoride concentration in the cell, thus reducing its toxicity. In Ruegeria pomeroyi (strain ATCC 700808 / DSM 15171 / DSS-3) (Silicibacter pomeroyi), this protein is Fluoride-specific ion channel FluC.